We begin with the raw amino-acid sequence, 202 residues long: Probable ATP-dependent Clp protease proteolytic subunit 3 (202 aa).

Ser-101 serves as the catalytic Nucleophile. Residue His-126 is part of the active site.

The protein belongs to the peptidase S14 family. In terms of assembly, fourteen ClpP subunits assemble into 2 heptameric rings which stack back to back to give a disk-like structure with a central cavity, resembling the structure of eukaryotic proteasomes.

Its subcellular location is the cytoplasm. It carries out the reaction Hydrolysis of proteins to small peptides in the presence of ATP and magnesium. alpha-casein is the usual test substrate. In the absence of ATP, only oligopeptides shorter than five residues are hydrolyzed (such as succinyl-Leu-Tyr-|-NHMec, and Leu-Tyr-Leu-|-Tyr-Trp, in which cleavage of the -Tyr-|-Leu- and -Tyr-|-Trp bonds also occurs).. In terms of biological role, cleaves peptides in various proteins in a process that requires ATP hydrolysis. Has a chymotrypsin-like activity. Plays a major role in the degradation of misfolded proteins. The chain is Probable ATP-dependent Clp protease proteolytic subunit 3 from Synechocystis sp. (strain ATCC 27184 / PCC 6803 / Kazusa).